The chain runs to 105 residues: uncharacterized protein (105 aa).

Positions 1–19 (MKLVFIFATAAIMGVVVYG) are cleaved as a signal peptide.

This is an uncharacterized protein from Magallana gigas (Pacific oyster).